We begin with the raw amino-acid sequence, 138 residues long: ATP synthase epsilon chain (138 aa).

Belongs to the ATPase epsilon chain family. As to quaternary structure, F-type ATPases have 2 components, CF(1) - the catalytic core - and CF(0) - the membrane proton channel. CF(1) has five subunits: alpha(3), beta(3), gamma(1), delta(1), epsilon(1). CF(0) has three main subunits: a, b and c.

The protein localises to the cell inner membrane. In terms of biological role, produces ATP from ADP in the presence of a proton gradient across the membrane. This Methylibium petroleiphilum (strain ATCC BAA-1232 / LMG 22953 / PM1) protein is ATP synthase epsilon chain.